The chain runs to 357 residues: Peptide chain release factor 1 (357 aa).

Q236 is subject to N5-methylglutamine.

It belongs to the prokaryotic/mitochondrial release factor family. In terms of processing, methylated by PrmC. Methylation increases the termination efficiency of RF1.

It localises to the cytoplasm. Functionally, peptide chain release factor 1 directs the termination of translation in response to the peptide chain termination codons UAG and UAA. The sequence is that of Peptide chain release factor 1 (prfA) from Mycobacterium bovis (strain ATCC BAA-935 / AF2122/97).